Consider the following 325-residue polypeptide: Beta-ketoacyl-[acyl-carrier-protein] synthase III (325 aa).

Residues Cys-119 and His-252 contribute to the active site. The tract at residues 253–257 (QANIR) is ACP-binding. Asn-282 is a catalytic residue.

This sequence belongs to the thiolase-like superfamily. FabH family. Homodimer.

The protein localises to the cytoplasm. The catalysed reaction is malonyl-[ACP] + acetyl-CoA + H(+) = 3-oxobutanoyl-[ACP] + CO2 + CoA. It functions in the pathway lipid metabolism; fatty acid biosynthesis. Catalyzes the condensation reaction of fatty acid synthesis by the addition to an acyl acceptor of two carbons from malonyl-ACP. Catalyzes the first condensation reaction which initiates fatty acid synthesis and may therefore play a role in governing the total rate of fatty acid production. Possesses both acetoacetyl-ACP synthase and acetyl transacylase activities. Its substrate specificity determines the biosynthesis of branched-chain and/or straight-chain of fatty acids. The chain is Beta-ketoacyl-[acyl-carrier-protein] synthase III from Verminephrobacter eiseniae (strain EF01-2).